The following is a 440-amino-acid chain: 3-phosphoshikimate 1-carboxyvinyltransferase (440 aa).

3-phosphoshikimate-binding residues include Lys25, Ser26, and Arg30. A phosphoenolpyruvate-binding site is contributed by Lys25. The phosphoenolpyruvate site is built by Gly96 and Arg124. The 3-phosphoshikimate site is built by Ser168, Gln169, Asp310, and Lys337. A phosphoenolpyruvate-binding site is contributed by Gln169. Asp310 acts as the Proton acceptor in catalysis. Positions 341, 382, and 409 each coordinate phosphoenolpyruvate.

The protein belongs to the EPSP synthase family. As to quaternary structure, monomer.

It is found in the cytoplasm. The catalysed reaction is 3-phosphoshikimate + phosphoenolpyruvate = 5-O-(1-carboxyvinyl)-3-phosphoshikimate + phosphate. The protein operates within metabolic intermediate biosynthesis; chorismate biosynthesis; chorismate from D-erythrose 4-phosphate and phosphoenolpyruvate: step 6/7. In terms of biological role, catalyzes the transfer of the enolpyruvyl moiety of phosphoenolpyruvate (PEP) to the 5-hydroxyl of shikimate-3-phosphate (S3P) to produce enolpyruvyl shikimate-3-phosphate and inorganic phosphate. The polypeptide is 3-phosphoshikimate 1-carboxyvinyltransferase (Chlamydia trachomatis serovar L2 (strain ATCC VR-902B / DSM 19102 / 434/Bu)).